Reading from the N-terminus, the 141-residue chain is ATP synthase epsilon chain (141 aa).

Belongs to the ATPase epsilon chain family. As to quaternary structure, F-type ATPases have 2 components, CF(1) - the catalytic core - and CF(0) - the membrane proton channel. CF(1) has five subunits: alpha(3), beta(3), gamma(1), delta(1), epsilon(1). CF(0) has three main subunits: a, b and c.

Its subcellular location is the cell inner membrane. In terms of biological role, produces ATP from ADP in the presence of a proton gradient across the membrane. This Burkholderia cenocepacia (strain ATCC BAA-245 / DSM 16553 / LMG 16656 / NCTC 13227 / J2315 / CF5610) (Burkholderia cepacia (strain J2315)) protein is ATP synthase epsilon chain.